The sequence spans 216 residues: uncharacterized protein (216 aa).

This is an uncharacterized protein from Methylophilus leisingeri (strain DSM 6813 / VKM B-2013 / DM11).